Consider the following 271-residue polypeptide: Formamidopyrimidine-DNA glycosylase (271 aa).

The active-site Schiff-base intermediate with DNA is the P2. The Proton donor role is filled by E3. K58 functions as the Proton donor; for beta-elimination activity in the catalytic mechanism. DNA contacts are provided by H91, R110, and R152. The FPG-type zinc-finger motif lies at 237 to 271 (WVYGRAGQSCRQCGELVSKTRQGQRSTFFCARCQH). R261 serves as the catalytic Proton donor; for delta-elimination activity.

Belongs to the FPG family. In terms of assembly, monomer. Zn(2+) serves as cofactor.

The catalysed reaction is Hydrolysis of DNA containing ring-opened 7-methylguanine residues, releasing 2,6-diamino-4-hydroxy-5-(N-methyl)formamidopyrimidine.. The enzyme catalyses 2'-deoxyribonucleotide-(2'-deoxyribose 5'-phosphate)-2'-deoxyribonucleotide-DNA = a 3'-end 2'-deoxyribonucleotide-(2,3-dehydro-2,3-deoxyribose 5'-phosphate)-DNA + a 5'-end 5'-phospho-2'-deoxyribonucleoside-DNA + H(+). Its function is as follows. Involved in base excision repair of DNA damaged by oxidation or by mutagenic agents. Acts as a DNA glycosylase that recognizes and removes damaged bases. Has a preference for oxidized purines, such as 7,8-dihydro-8-oxoguanine (8-oxoG). Has AP (apurinic/apyrimidinic) lyase activity and introduces nicks in the DNA strand. Cleaves the DNA backbone by beta-delta elimination to generate a single-strand break at the site of the removed base with both 3'- and 5'-phosphates. The polypeptide is Formamidopyrimidine-DNA glycosylase (Nitrosomonas europaea (strain ATCC 19718 / CIP 103999 / KCTC 2705 / NBRC 14298)).